A 418-amino-acid polypeptide reads, in one-letter code: Tektin-1 (418 aa).

Coiled-coil stretches lie at residues 21–84, 268–308, and 336–383; these read KNQY…LEQL, LKET…DQEG, and RLIK…ENTI. The disordered stretch occupies residues 399–418; sequence PRDGDDHGEWAGGSHPEAVC.

Belongs to the tektin family. As to quaternary structure, microtubule inner protein component of sperm flagellar doublet microtubules. Ubiquitinated, leading to its degradation. Deubiquitinated by USP16, promoting its stability. Expressed in trachea multiciliated cells.

It localises to the cytoplasm. The protein localises to the cytoskeleton. Its subcellular location is the cilium axoneme. It is found in the flagellum axoneme. Microtubule inner protein (MIP) part of the dynein-decorated doublet microtubules (DMTs) in cilia and flagellar axoneme. Forms filamentous polymers in the walls of ciliary and flagellar microtubules. The sequence is that of Tektin-1 (TEKT1) from Bos taurus (Bovine).